The chain runs to 534 residues: Alkaline serine exoprotease A (534 aa).

An N-terminal signal peptide occupies residues 1 to 21 (MLKKLLSCCITSALCFHSSLA). The propeptide occupies 22–141 (FSQPNEIADS…LSLDPIVSAD (120 aa)). The 78-residue stretch at 57-134 (RYIVVFQQPQ…YIEQDRILSL (78 aa)) folds into the Inhibitor I9 domain. One can recognise a Peptidase S8 domain in the interval 148-419 (IWGLDRIDQR…KLLYSLTDAD (272 aa)). Active-site charge relay system residues include Asp-180, His-213, and Ser-363. Residues 423-442 (DCGGPDPTPDPEGKLTSGVP) form a disordered region.

This sequence belongs to the peptidase S8 family.

This chain is Alkaline serine exoprotease A (proA), found in Vibrio alginolyticus.